The following is a 190-amino-acid chain: GMP synthase [glutamine-hydrolyzing] subunit A (190 aa).

The Glutamine amidotransferase type-1 domain occupies 2 to 189 (TILVINNKGQ…YEICKKRCNN (188 aa)). The Nucleophile role is filled by C76. Residues H163 and E165 contribute to the active site.

Heterodimer composed of a glutamine amidotransferase subunit (A) and a GMP-binding subunit (B).

The enzyme catalyses XMP + L-glutamine + ATP + H2O = GMP + L-glutamate + AMP + diphosphate + 2 H(+). Its pathway is purine metabolism; GMP biosynthesis; GMP from XMP (L-Gln route): step 1/1. Functionally, catalyzes the synthesis of GMP from XMP. The sequence is that of GMP synthase [glutamine-hydrolyzing] subunit A from Methanobrevibacter smithii (strain ATCC 35061 / DSM 861 / OCM 144 / PS).